Consider the following 249-residue polypeptide: Diaminopimelate epimerase (249 aa).

Asn11 and Asn60 together coordinate substrate. Cys69 serves as the catalytic Proton donor. Substrate is bound by residues 70 to 71 (GN), Asn164, and 182 to 183 (ER). The active-site Proton acceptor is the Cys192. A substrate-binding site is contributed by 193-194 (GT).

This sequence belongs to the diaminopimelate epimerase family. In terms of assembly, homodimer.

It is found in the cytoplasm. The catalysed reaction is (2S,6S)-2,6-diaminopimelate = meso-2,6-diaminopimelate. The protein operates within amino-acid biosynthesis; L-lysine biosynthesis via DAP pathway; DL-2,6-diaminopimelate from LL-2,6-diaminopimelate: step 1/1. Functionally, catalyzes the stereoinversion of LL-2,6-diaminopimelate (L,L-DAP) to meso-diaminopimelate (meso-DAP), a precursor of L-lysine and an essential component of the bacterial peptidoglycan. This Campylobacter jejuni (strain RM1221) protein is Diaminopimelate epimerase.